Reading from the N-terminus, the 45-residue chain is Endo-1,4-beta-xylanase Xyn10A (45 aa).

This sequence belongs to the glycosyl hydrolase 10 (cellulase F) family.

The protein localises to the secreted. The protein resides in the extracellular space. The catalysed reaction is Endohydrolysis of (1-&gt;4)-beta-D-xylosidic linkages in xylans.. It carries out the reaction Endohydrolysis of (1-&gt;4)-beta-D-glucosidic linkages in cellulose, lichenin and cereal beta-D-glucans.. Its pathway is glycan degradation; xylan degradation. In terms of biological role, has xylanase, avicelase and cellobiohydrolase activity. The protein is Endo-1,4-beta-xylanase Xyn10A of Gloeophyllum trabeum (Brown rot fungus).